We begin with the raw amino-acid sequence, 969 residues long: Glycine dehydrogenase (decarboxylating) (969 aa).

Lys-716 carries the post-translational modification N6-(pyridoxal phosphate)lysine.

The protein belongs to the GcvP family. In terms of assembly, the glycine cleavage system is composed of four proteins: P, T, L and H. The cofactor is pyridoxal 5'-phosphate.

It carries out the reaction N(6)-[(R)-lipoyl]-L-lysyl-[glycine-cleavage complex H protein] + glycine + H(+) = N(6)-[(R)-S(8)-aminomethyldihydrolipoyl]-L-lysyl-[glycine-cleavage complex H protein] + CO2. Its function is as follows. The glycine cleavage system catalyzes the degradation of glycine. The P protein binds the alpha-amino group of glycine through its pyridoxal phosphate cofactor; CO(2) is released and the remaining methylamine moiety is then transferred to the lipoamide cofactor of the H protein. The sequence is that of Glycine dehydrogenase (decarboxylating) from Shewanella woodyi (strain ATCC 51908 / MS32).